Consider the following 361-residue polypeptide: Caveolae-associated protein 4 (361 aa).

The segment at 1–21 is disordered; the sequence is MEHNGSASNADKIHQNRLSNV. Residues 100 to 124 are a coiled coil; it reads IKDVKARVEKQQTHVKKVEAKQEEI. Ser152, Ser171, and Ser172 each carry phosphoserine. A coiled-coil region spans residues 204–248; it reads ENMQKTRQNFDKKVNRIRTRIVTPERRERLRQSGERLRQSGERLK. The segment covering 230–255 has biased composition (basic and acidic residues); that stretch reads RERLRQSGERLRQSGERLKQSGERFK. 2 disordered regions span residues 230-283 and 310-346; these read RERL…AVAE and PEAL…FKPQ. Thr335 is modified (phosphothreonine). A Phosphoserine modification is found at Ser354.

The protein belongs to the CAVIN family. As to quaternary structure, component of the CAVIN complex composed of CAVIN1, CAVIN2, CAVIN3 and CAVIN4. Interacts with CAVIN1, ADRA1A, ADRA1B, MAPK1 and MAPK3. Interacts with CAVIN2; this augments the transactivation of NPPA.

The protein resides in the cytoplasm. It localises to the myofibril. Its subcellular location is the sarcomere. The protein localises to the cytosol. It is found in the cell membrane. The protein resides in the sarcolemma. It localises to the membrane. Its subcellular location is the caveola. Functionally, modulates the morphology of formed caveolae in cardiomyocytes, but is not required for caveolar formation. Facilitates the recruitment of MAPK1/3 to caveolae within cardiomyocytes and regulates alpha-1 adrenergic receptor-induced hypertrophic responses in cardiomyocytes through MAPK1/3 activation. Contributes to proper membrane localization and stabilization of caveolin-3 (CAV3) in cardiomyocytes. Induces RHOA activation and activates NPPA transcription and myofibrillar organization through the Rho/ROCK signaling pathway. The protein is Caveolae-associated protein 4 (CAVIN4) of Bos taurus (Bovine).